An 892-amino-acid chain; its full sequence is Alanine--tRNA ligase (892 aa).

4 residues coordinate Zn(2+): histidine 578, histidine 582, cysteine 681, and histidine 685.

The protein belongs to the class-II aminoacyl-tRNA synthetase family. Zn(2+) is required as a cofactor.

The protein resides in the cytoplasm. It carries out the reaction tRNA(Ala) + L-alanine + ATP = L-alanyl-tRNA(Ala) + AMP + diphosphate. Functionally, catalyzes the attachment of alanine to tRNA(Ala) in a two-step reaction: alanine is first activated by ATP to form Ala-AMP and then transferred to the acceptor end of tRNA(Ala). Also edits incorrectly charged Ser-tRNA(Ala) and Gly-tRNA(Ala) via its editing domain. The protein is Alanine--tRNA ligase of Cutibacterium acnes (strain DSM 16379 / KPA171202) (Propionibacterium acnes).